The sequence spans 312 residues: Aspartoacylase (312 aa).

Zn(2+)-binding residues include His20 and Glu23. N-acetyl-L-aspartate is bound by residues Arg62, Asn69, and Arg70. His115 is a binding site for Zn(2+). The N-acetyl-L-aspartate site is built by Tyr163 and Arg167. Residue Glu177 is the Proton donor/acceptor of the active site. Residue Tyr287 participates in N-acetyl-L-aspartate binding.

It belongs to the AspA/AstE family. Aspartoacylase subfamily. Homodimer. The cofactor is Zn(2+). In terms of tissue distribution, detected in kidney proximal tubule cells (at protein level).

The protein localises to the cytoplasm. It is found in the nucleus. It catalyses the reaction an N-acyl-L-aspartate + H2O = a carboxylate + L-aspartate. It carries out the reaction N-acetyl-L-aspartate + H2O = L-aspartate + acetate. Catalyzes the deacetylation of N-acetylaspartic acid (NAA) to produce acetate and L-aspartate. NAA occurs in high concentration in brain and its hydrolysis NAA plays a significant part in the maintenance of intact white matter. In other tissues it acts as a scavenger of NAA from body fluids. This Rattus norvegicus (Rat) protein is Aspartoacylase.